An 89-amino-acid polypeptide reads, in one-letter code: Cell division topological specificity factor (89 aa).

The protein belongs to the MinE family.

In terms of biological role, prevents the cell division inhibition by proteins MinC and MinD at internal division sites while permitting inhibition at polar sites. This ensures cell division at the proper site by restricting the formation of a division septum at the midpoint of the long axis of the cell. This is Cell division topological specificity factor from Photorhabdus laumondii subsp. laumondii (strain DSM 15139 / CIP 105565 / TT01) (Photorhabdus luminescens subsp. laumondii).